An 89-amino-acid chain; its full sequence is Phasin PhaP (89 aa).

Helix regions lie at residues Thr-3 to Glu-26 and Asp-39 to Gln-83.

As to quaternary structure, homotetramer.

It localises to the cellular thylakoid membrane. It is found in the cytoplasm. The protein operates within biopolymer metabolism; poly-(R)-3-hydroxybutanoate biosynthesis. A phasin, it attaches to the polyhydroxybutyrate (PHB) granule surface regulating the number and size of PHB granules within a cell. It probably also acts as a regulator affecting the biosynthetic activity of PHB synthase in vivo. The protein is Phasin PhaP of Synechocystis sp. (strain ATCC 27184 / PCC 6803 / Kazusa).